A 299-amino-acid polypeptide reads, in one-letter code: ATP phosphoribosyltransferase (299 aa).

Belongs to the ATP phosphoribosyltransferase family. Long subfamily. As to quaternary structure, equilibrium between an active dimeric form, an inactive hexameric form and higher aggregates. Interconversion between the various forms is largely reversible and is influenced by the natural substrates and inhibitors of the enzyme. Mg(2+) serves as cofactor.

The protein localises to the cytoplasm. The catalysed reaction is 1-(5-phospho-beta-D-ribosyl)-ATP + diphosphate = 5-phospho-alpha-D-ribose 1-diphosphate + ATP. It participates in amino-acid biosynthesis; L-histidine biosynthesis; L-histidine from 5-phospho-alpha-D-ribose 1-diphosphate: step 1/9. With respect to regulation, feedback inhibited by histidine. Its function is as follows. Catalyzes the condensation of ATP and 5-phosphoribose 1-diphosphate to form N'-(5'-phosphoribosyl)-ATP (PR-ATP). Has a crucial role in the pathway because the rate of histidine biosynthesis seems to be controlled primarily by regulation of HisG enzymatic activity. The sequence is that of ATP phosphoribosyltransferase from Enterobacter sp. (strain 638).